A 430-amino-acid polypeptide reads, in one-letter code: Adenylosuccinate synthetase (430 aa).

Residues 12 to 18 (GDEGKGK) and 40 to 42 (GHT) each bind GTP. Aspartate 13 (proton acceptor) is an active-site residue. The Mg(2+) site is built by aspartate 13 and glycine 40. Residues 13–16 (DEGK), 38–41 (NAGH), threonine 128, arginine 142, glutamine 223, threonine 238, and arginine 302 contribute to the IMP site. Residue histidine 41 is the Proton donor of the active site. 298-304 (TTTGRPR) lines the substrate pocket. GTP-binding positions include arginine 304, 330-332 (SID), and 412-414 (SVG).

Belongs to the adenylosuccinate synthetase family. Homodimer. It depends on Mg(2+) as a cofactor.

It is found in the cytoplasm. It catalyses the reaction IMP + L-aspartate + GTP = N(6)-(1,2-dicarboxyethyl)-AMP + GDP + phosphate + 2 H(+). Its pathway is purine metabolism; AMP biosynthesis via de novo pathway; AMP from IMP: step 1/2. Plays an important role in the de novo pathway of purine nucleotide biosynthesis. Catalyzes the first committed step in the biosynthesis of AMP from IMP. The sequence is that of Adenylosuccinate synthetase from Streptococcus uberis (strain ATCC BAA-854 / 0140J).